We begin with the raw amino-acid sequence, 34 residues long: Leader peptide SpeFL (34 aa).

The segment at 1 to 13 (MENNSRTMPHIRR) is sensor domain. An Ornithine recognition loop motif is present at residues 10–16 (HIRRTTH). An L-ornithine-binding site is contributed by Arg-13. The effector domain stretch occupies residues 14–34 (TTHIMKFAHRNSFDFHFFNAR).

This sequence belongs to the speF operon leader peptide family. Binds ornithine in stalled 70S ribosomes, blocking the upper two-thirds of the exit tunnel. Contacts 23S rRNA and ribosomal proteins L4 and L22.

In terms of biological role, a small protein (arrest peptide) encoded upstream of inducible ornithine carboxylase gene (speF) that controls expression of downstream genes (speF and patE) by nascent chain-translational arrest and transcriptional attenuation. In the presence of ornithine a toeprint due to ribosomal arrest can be seen on the speFL transcript. Only L-ornithine (not other tested amino acids) has this effect. It is thought that in the presence of ornithine, ribosomal stalling on speFL prevents binding of Rho transcription termination factor to a downstream rut site allowing transcription of the operon. In the absence of ornithine, ribosomes terminate translation and are recycled, exposing the rut site allowing Rho to bind and prematurely terminate transcription. The presence of a pair of rare Arg codons could slow down translation to prevent polysome accumulation and to expose the rut site to Rho. This Escherichia coli (strain K12) protein is Leader peptide SpeFL.